The primary structure comprises 145 residues: D-aminoacyl-tRNA deacylase (145 aa).

The Gly-cisPro motif, important for rejection of L-amino acids signature appears at 137 to 138; the sequence is GP.

It belongs to the DTD family. Homodimer.

Its subcellular location is the cytoplasm. The enzyme catalyses glycyl-tRNA(Ala) + H2O = tRNA(Ala) + glycine + H(+). It carries out the reaction a D-aminoacyl-tRNA + H2O = a tRNA + a D-alpha-amino acid + H(+). In terms of biological role, an aminoacyl-tRNA editing enzyme that deacylates mischarged D-aminoacyl-tRNAs. Also deacylates mischarged glycyl-tRNA(Ala), protecting cells against glycine mischarging by AlaRS. Acts via tRNA-based rather than protein-based catalysis; rejects L-amino acids rather than detecting D-amino acids in the active site. By recycling D-aminoacyl-tRNA to D-amino acids and free tRNA molecules, this enzyme counteracts the toxicity associated with the formation of D-aminoacyl-tRNA entities in vivo and helps enforce protein L-homochirality. The chain is D-aminoacyl-tRNA deacylase from Citrobacter koseri (strain ATCC BAA-895 / CDC 4225-83 / SGSC4696).